We begin with the raw amino-acid sequence, 178 residues long: Cytidylate kinase (178 aa).

7-15 (GLPGSGTTS) serves as a coordination point for ATP.

Belongs to the cytidylate kinase family. Type 2 subfamily.

The protein localises to the cytoplasm. The enzyme catalyses CMP + ATP = CDP + ADP. The catalysed reaction is dCMP + ATP = dCDP + ADP. The protein is Cytidylate kinase of Methanospirillum hungatei JF-1 (strain ATCC 27890 / DSM 864 / NBRC 100397 / JF-1).